A 485-amino-acid chain; its full sequence is Aspartyl/glutamyl-tRNA(Asn/Gln) amidotransferase subunit B (485 aa).

Belongs to the GatB/GatE family. GatB subfamily. As to quaternary structure, heterotrimer of A, B and C subunits.

It carries out the reaction L-glutamyl-tRNA(Gln) + L-glutamine + ATP + H2O = L-glutaminyl-tRNA(Gln) + L-glutamate + ADP + phosphate + H(+). The catalysed reaction is L-aspartyl-tRNA(Asn) + L-glutamine + ATP + H2O = L-asparaginyl-tRNA(Asn) + L-glutamate + ADP + phosphate + 2 H(+). Its function is as follows. Allows the formation of correctly charged Asn-tRNA(Asn) or Gln-tRNA(Gln) through the transamidation of misacylated Asp-tRNA(Asn) or Glu-tRNA(Gln) in organisms which lack either or both of asparaginyl-tRNA or glutaminyl-tRNA synthetases. The reaction takes place in the presence of glutamine and ATP through an activated phospho-Asp-tRNA(Asn) or phospho-Glu-tRNA(Gln). This Borrelia hermsii (strain HS1 / DAH) protein is Aspartyl/glutamyl-tRNA(Asn/Gln) amidotransferase subunit B.